Reading from the N-terminus, the 427-residue chain is 3-phosphoshikimate 1-carboxyvinyltransferase (427 aa).

K22, S23, and R27 together coordinate 3-phosphoshikimate. K22 contacts phosphoenolpyruvate. Phosphoenolpyruvate-binding residues include G96 and R124. Residues S169, S170, Q171, S197, D313, N336, and K340 each contribute to the 3-phosphoshikimate site. Q171 contributes to the phosphoenolpyruvate binding site. Residue D313 is the Proton acceptor of the active site. Residues R344, R386, and K411 each coordinate phosphoenolpyruvate.

The protein belongs to the EPSP synthase family. In terms of assembly, monomer.

It localises to the cytoplasm. The enzyme catalyses 3-phosphoshikimate + phosphoenolpyruvate = 5-O-(1-carboxyvinyl)-3-phosphoshikimate + phosphate. Its pathway is metabolic intermediate biosynthesis; chorismate biosynthesis; chorismate from D-erythrose 4-phosphate and phosphoenolpyruvate: step 6/7. Its function is as follows. Catalyzes the transfer of the enolpyruvyl moiety of phosphoenolpyruvate (PEP) to the 5-hydroxyl of shikimate-3-phosphate (S3P) to produce enolpyruvyl shikimate-3-phosphate and inorganic phosphate. This is 3-phosphoshikimate 1-carboxyvinyltransferase from Salmonella arizonae (strain ATCC BAA-731 / CDC346-86 / RSK2980).